Reading from the N-terminus, the 7031-residue chain is Extracellular matrix-binding protein EbhB (7031 aa).

A signal peptide spans 1-39; it reads MNYRDKIQKFSIRKYTVGTFSTVIATLVFLGFNTSQAHA. The segment covering 41–59 has biased composition (polar residues); it reads ETNQPASVVKQKQQSNNEQ. Disordered regions lie at residues 41 to 86, 99 to 152, 250 to 277, 1342 to 1373, and 2418 to 2438; these read ETNQ…HENE, KVAQ…GNDN, PQRQ…PRSV, NNIT…ATTD, and TITP…TLTA. Positions 65–80 are enriched in low complexity; sequence SQVQNSQNSQNGQSLS. Residues 99–117 are compositionally biased toward polar residues; sequence KVAQSSTTNDEQPASQNVN. Residues 130-140 show a composition bias toward basic and acidic residues; that stretch reads PDKEQSKHKQN. 4 stretches are compositionally biased toward polar residues: residues 141–151, 250–266, 1360–1373, and 2427–2438; these read ESQSANKNGND, PQRQ…QTRS, FRTT…ATTD, and HSVSSNPSTLTA. 38 FIVAR domains span residues 2524-2580, 2610-2666, 2687-2750, 2780-2836, 2864-2919, 2947-3002, 3030-3085, 3154-3212, 3280-3339, 3407-3465, 3533-3591, 3659-3717, 3785-3843, 3911-3969, 4037-4095, 4163-4221, 4289-4347, 4415-4473, 4541-4599, 4667-4725, 4793-4851, 4919-4977, 5045-5103, 5171-5229, 5297-5355, 5423-5481, 5549-5607, 5675-5733, 5801-5859, 5927-5985, 6053-6111, 6179-6236, 6304-6362, 6430-6488, 6556-6614, 6682-6740, 6818-6866, and 6934-6992; these read AKNH…VSDA, SKNN…ISDE, DTHA…VQSA, AKTK…IAAE, AKTQ…IRQN, AKNQ…INTN, AKTQ…INDK, AMTK…VNQK, AMTG…VNNA, AMGN…VNRA, AMGN…VTEA, AMNT…ITQK, AMAS…VEAA, AMGN…VEQA, AMGT…VTAA, AMKG…ITQA, QMGN…VEAA, AMAN…VENA, AMGT…INQI, AMGQ…VDRA, AMNS…VDNA, AMGA…INGM, AMTA…VNSA, AMKG…ITQV, AMHS…VEQA, AMGQ…VERA, AMTA…VTNA, AMKG…INQA, AMTN…VETA, AMSN…VEQA, AMNQ…INQK, AMGN…VQAA, AMGQ…VEAA, AMQR…VEQA, AMDQ…VTAA, AMNQ…VTQA, DKDQ…VEAA, and AMGN…VEAA.

The chain is Extracellular matrix-binding protein EbhB (ebhB) from Staphylococcus aureus (strain Newman).